A 270-amino-acid chain; its full sequence is Orotidine 5'-phosphate decarboxylase (270 aa).

The active-site Proton donor is the K89.

It belongs to the OMP decarboxylase family. Type 2 subfamily.

It carries out the reaction orotidine 5'-phosphate + H(+) = UMP + CO2. Its pathway is pyrimidine metabolism; UMP biosynthesis via de novo pathway; UMP from orotate: step 2/2. The sequence is that of Orotidine 5'-phosphate decarboxylase from Dehalococcoides mccartyi (strain CBDB1).